The chain runs to 81 residues: Small ribosomal subunit protein uS17 (81 aa).

This sequence belongs to the universal ribosomal protein uS17 family. As to quaternary structure, part of the 30S ribosomal subunit.

Functionally, one of the primary rRNA binding proteins, it binds specifically to the 5'-end of 16S ribosomal RNA. The polypeptide is Small ribosomal subunit protein uS17 (Protochlamydia amoebophila (strain UWE25)).